The primary structure comprises 429 residues: MKRVLAIILGGGAGTRLYPLTKLRAKPAVPLAGKYRLIDIPVSNCINSEITKIYVLTQFNSASLNRHLSRTYNFTGFNDEFVEVLAAQQTAENPSWFQGTADAVRQYLWLMEEWDVDEYLILSGDHLYRMDYREYIQRHRETKADITLSVVPIDEKRASSFGLMKIDDNARVVDFSEKPKGEALRQMQVDTSILGLSPDQARKNPYIASMGIYIFNREVLGKLLRQNPEQTDFGKEIIPGAKTDYNLQAYLYKGYWEDIGTIEAFYESNLALTQQPQPPFSFYDEKAPIYTRPRYLPPTKVLNCTITESMISEGCILKDCRIHHSVLGIRSRVESDCTIEDSMLMGADYYESSTKRKAVLEAGKVPQGIGAGTTIRRAIIDKNARIGRNVLIINKDRIEEAEREDEGFLIRSGIVVVIKNATIPDGTVI.

Alpha-D-glucose 1-phosphate-binding positions include Gly-162, 177–178, and Ser-209; that span reads EK.

This sequence belongs to the bacterial/plant glucose-1-phosphate adenylyltransferase family. In terms of assembly, homotetramer.

It carries out the reaction alpha-D-glucose 1-phosphate + ATP + H(+) = ADP-alpha-D-glucose + diphosphate. It participates in glycan biosynthesis; glycogen biosynthesis. Functionally, involved in the biosynthesis of ADP-glucose, a building block required for the elongation reactions to produce glycogen. Catalyzes the reaction between ATP and alpha-D-glucose 1-phosphate (G1P) to produce pyrophosphate and ADP-Glc. The chain is Glucose-1-phosphate adenylyltransferase from Gloeothece citriformis (strain PCC 7424) (Cyanothece sp. (strain PCC 7424)).